The chain runs to 219 residues: Thiamine-phosphate synthase (219 aa).

4-amino-2-methyl-5-(diphosphooxymethyl)pyrimidine contacts are provided by residues 44–48 (QFREK) and N79. Mg(2+) is bound by residues D80 and D99. S117 contacts 4-amino-2-methyl-5-(diphosphooxymethyl)pyrimidine. A 2-[(2R,5Z)-2-carboxy-4-methylthiazol-5(2H)-ylidene]ethyl phosphate-binding site is contributed by 143-145 (TST). K146 contributes to the 4-amino-2-methyl-5-(diphosphooxymethyl)pyrimidine binding site. Residues G175 and 195–196 (IS) each bind 2-[(2R,5Z)-2-carboxy-4-methylthiazol-5(2H)-ylidene]ethyl phosphate.

The protein belongs to the thiamine-phosphate synthase family. Mg(2+) serves as cofactor.

The catalysed reaction is 2-[(2R,5Z)-2-carboxy-4-methylthiazol-5(2H)-ylidene]ethyl phosphate + 4-amino-2-methyl-5-(diphosphooxymethyl)pyrimidine + 2 H(+) = thiamine phosphate + CO2 + diphosphate. The enzyme catalyses 2-(2-carboxy-4-methylthiazol-5-yl)ethyl phosphate + 4-amino-2-methyl-5-(diphosphooxymethyl)pyrimidine + 2 H(+) = thiamine phosphate + CO2 + diphosphate. It carries out the reaction 4-methyl-5-(2-phosphooxyethyl)-thiazole + 4-amino-2-methyl-5-(diphosphooxymethyl)pyrimidine + H(+) = thiamine phosphate + diphosphate. The protein operates within cofactor biosynthesis; thiamine diphosphate biosynthesis; thiamine phosphate from 4-amino-2-methyl-5-diphosphomethylpyrimidine and 4-methyl-5-(2-phosphoethyl)-thiazole: step 1/1. Condenses 4-methyl-5-(beta-hydroxyethyl)thiazole monophosphate (THZ-P) and 2-methyl-4-amino-5-hydroxymethyl pyrimidine pyrophosphate (HMP-PP) to form thiamine monophosphate (TMP). The protein is Thiamine-phosphate synthase of Bacillus cereus (strain AH187).